The sequence spans 277 residues: Ribonuclease HII (277 aa).

The tract at residues 1 to 32 (MIRNQANKPGRAKAATAARKSPLTKSAAKPAA) is disordered. Low complexity predominate over residues 20 to 32 (KSPLTKSAAKPAA). One can recognise an RNase H type-2 domain in the interval 64 to 252 (WPVAGCDEAG…VVAARRKHQP (189 aa)). Aspartate 70, glutamate 71, and aspartate 161 together coordinate a divalent metal cation.

The protein belongs to the RNase HII family. The cofactor is Mn(2+). Mg(2+) is required as a cofactor.

The protein localises to the cytoplasm. It carries out the reaction Endonucleolytic cleavage to 5'-phosphomonoester.. Endonuclease that specifically degrades the RNA of RNA-DNA hybrids. This is Ribonuclease HII from Bradyrhizobium sp. (strain ORS 278).